Here is a 234-residue protein sequence, read N- to C-terminus: tRNA (guanine-N(1)-)-methyltransferase (234 aa).

S-adenosyl-L-methionine contacts are provided by residues Gly115 and 135–140 (VGDYIL).

The protein belongs to the RNA methyltransferase TrmD family. In terms of assembly, homodimer.

The protein resides in the cytoplasm. It carries out the reaction guanosine(37) in tRNA + S-adenosyl-L-methionine = N(1)-methylguanosine(37) in tRNA + S-adenosyl-L-homocysteine + H(+). In terms of biological role, specifically methylates guanosine-37 in various tRNAs. This chain is tRNA (guanine-N(1)-)-methyltransferase, found in Rickettsia africae (strain ESF-5).